Consider the following 711-residue polypeptide: Ribosomal RNA large subunit methyltransferase K/L (711 aa).

The region spanning 43 to 154 (TLYRTLLWSR…RENLVISLDL (112 aa)) is the THUMP domain.

It belongs to the methyltransferase superfamily. RlmKL family.

It is found in the cytoplasm. It catalyses the reaction guanosine(2445) in 23S rRNA + S-adenosyl-L-methionine = N(2)-methylguanosine(2445) in 23S rRNA + S-adenosyl-L-homocysteine + H(+). It carries out the reaction guanosine(2069) in 23S rRNA + S-adenosyl-L-methionine = N(2)-methylguanosine(2069) in 23S rRNA + S-adenosyl-L-homocysteine + H(+). Functionally, specifically methylates the guanine in position 2445 (m2G2445) and the guanine in position 2069 (m7G2069) of 23S rRNA. The chain is Ribosomal RNA large subunit methyltransferase K/L from Haemophilus influenzae (strain 86-028NP).